The sequence spans 142 residues: ATP synthase epsilon chain (142 aa).

It belongs to the ATPase epsilon chain family. In terms of assembly, F-type ATPases have 2 components, CF(1) - the catalytic core - and CF(0) - the membrane proton channel. CF(1) has five subunits: alpha(3), beta(3), gamma(1), delta(1), epsilon(1). CF(0) has three main subunits: a, b and c.

The protein localises to the cell inner membrane. Its function is as follows. Produces ATP from ADP in the presence of a proton gradient across the membrane. This is ATP synthase epsilon chain from Shewanella loihica (strain ATCC BAA-1088 / PV-4).